Here is a 572-residue protein sequence, read N- to C-terminus: Proline--tRNA ligase (572 aa).

Belongs to the class-II aminoacyl-tRNA synthetase family. ProS type 1 subfamily. As to quaternary structure, homodimer.

It localises to the cytoplasm. The catalysed reaction is tRNA(Pro) + L-proline + ATP = L-prolyl-tRNA(Pro) + AMP + diphosphate. Functionally, catalyzes the attachment of proline to tRNA(Pro) in a two-step reaction: proline is first activated by ATP to form Pro-AMP and then transferred to the acceptor end of tRNA(Pro). As ProRS can inadvertently accommodate and process non-cognate amino acids such as alanine and cysteine, to avoid such errors it has two additional distinct editing activities against alanine. One activity is designated as 'pretransfer' editing and involves the tRNA(Pro)-independent hydrolysis of activated Ala-AMP. The other activity is designated 'posttransfer' editing and involves deacylation of mischarged Ala-tRNA(Pro). The misacylated Cys-tRNA(Pro) is not edited by ProRS. The polypeptide is Proline--tRNA ligase (Caldicellulosiruptor saccharolyticus (strain ATCC 43494 / DSM 8903 / Tp8T 6331)).